We begin with the raw amino-acid sequence, 510 residues long: 2,3-bisphosphoglycerate-independent phosphoglycerate mutase (510 aa).

Mn(2+)-binding residues include D12 and S62. The active-site Phosphoserine intermediate is S62. Substrate contacts are provided by residues H123, 153-154 (RD), R185, R191, 261-264 (RPDR), and K336. Mn(2+) contacts are provided by D403, H407, D444, H445, and H462.

Belongs to the BPG-independent phosphoglycerate mutase family. Monomer. Requires Mn(2+) as cofactor.

The enzyme catalyses (2R)-2-phosphoglycerate = (2R)-3-phosphoglycerate. Its pathway is carbohydrate degradation; glycolysis; pyruvate from D-glyceraldehyde 3-phosphate: step 3/5. Its function is as follows. Essential for rapid growth and for sporulation. Catalyzes the interconversion of 2-phosphoglycerate and 3-phosphoglycerate. This chain is 2,3-bisphosphoglycerate-independent phosphoglycerate mutase, found in Priestia megaterium (strain ATCC 12872 / QMB1551) (Bacillus megaterium).